The sequence spans 167 residues: Small ribosomal subunit protein uS5 (167 aa).

An S5 DRBM domain is found at 12 to 75; sequence LQEKLIAVNR…EKARRNMTTI (64 aa).

It belongs to the universal ribosomal protein uS5 family. Part of the 30S ribosomal subunit. Contacts proteins S4 and S8.

With S4 and S12 plays an important role in translational accuracy. In terms of biological role, located at the back of the 30S subunit body where it stabilizes the conformation of the head with respect to the body. The protein is Small ribosomal subunit protein uS5 of Vibrio parahaemolyticus serotype O3:K6 (strain RIMD 2210633).